The chain runs to 158 residues: U4/U6.U5 small nuclear ribonucleoprotein 27 kDa protein (158 aa).

Residues 1-102 (MGRSRSRSPE…AEDLEGKTEE (102 aa)) are disordered. Positions 13 to 59 (RERRRSRSASRERERRRRERSRSRERRRSRSRSPHRRRSRSPRRHRS) are enriched in basic residues. Residues 66–101 (RLKDRRDDDKKEPKESKGGGSKERQLAAEDLEGKTE) are compositionally biased toward basic and acidic residues.

The protein belongs to the SNUT3 family. Part of a tri-snRNP complex.

Its subcellular location is the nucleus. May play a role in mRNA splicing. The chain is U4/U6.U5 small nuclear ribonucleoprotein 27 kDa protein (snrnp27) from Xenopus laevis (African clawed frog).